The primary structure comprises 500 residues: Glycogen synthase (500 aa).

K20 serves as a coordination point for ADP-alpha-D-glucose.

This sequence belongs to the glycosyltransferase 1 family. Bacterial/plant glycogen synthase subfamily.

It carries out the reaction [(1-&gt;4)-alpha-D-glucosyl](n) + ADP-alpha-D-glucose = [(1-&gt;4)-alpha-D-glucosyl](n+1) + ADP + H(+). It functions in the pathway glycan biosynthesis; glycogen biosynthesis. Its function is as follows. Synthesizes alpha-1,4-glucan chains using ADP-glucose. The protein is Glycogen synthase of Desulforudis audaxviator (strain MP104C).